The sequence spans 179 residues: Interleukin-22b (179 aa).

The N-terminal stretch at 1 to 33 is a signal peptide; sequence MAVLQKSMSFSLMGTLAASCLLLIALWAQEANA. 2 disulfides stabilise this stretch: C40–C132 and C89–C178. N-linked (GlcNAc...) asparagine glycosylation is found at N54, N68, and N97.

The protein belongs to the IL-10 family.

It localises to the secreted. Functionally, cytokine that contributes to the inflammatory response in vivo. In Mus musculus (Mouse), this protein is Interleukin-22b.